The chain runs to 280 residues: Probable endonuclease 4 (280 aa).

Zn(2+) contacts are provided by His69, His109, Glu145, Asp179, His182, His216, Asp229, His231, and Glu261.

Belongs to the AP endonuclease 2 family. Zn(2+) serves as cofactor.

It carries out the reaction Endonucleolytic cleavage to 5'-phosphooligonucleotide end-products.. In terms of biological role, endonuclease IV plays a role in DNA repair. It cleaves phosphodiester bonds at apurinic or apyrimidinic (AP) sites, generating a 3'-hydroxyl group and a 5'-terminal sugar phosphate. This Photorhabdus laumondii subsp. laumondii (strain DSM 15139 / CIP 105565 / TT01) (Photorhabdus luminescens subsp. laumondii) protein is Probable endonuclease 4.